Here is a 490-residue protein sequence, read N- to C-terminus: MRINPPTYGSEISSIEKKNRGHIVQIIGPVLDVAFPPGKMPNIYNALIVKGRDTEQMNVTCEVQQLLGNNRVRAVAMNDTDGLMRGMEVIDTGTPITVPVGGSTLGRIFNVLGEPVDNLGPVDTNTTFTIHRSAPAFIQLDTKLSIFETGIKVVDLLAPYRRGGKIGLFGGAGVGKTVLIMELINNIAKAHGGVSVFGGVGERTREGNDLYMEMKESGVINEKNITESKVALVYGQMNEPPGARMRVGLTALTMAEYFRDVNEQDVLLFIDNIFRFVQAGSEVSALLGRMPSAVGYQPTLSTEMGSLQERITSTKEGSITSIQAVYVPADDLTDPAPATTFAHLDATTVLSRGLAAKGIYPAVDPLDSTSMMLQPRLVGEEHYETAQKVKQTLQRYKELQDIIAILGLDELSEEDRLTVARARKIERFLSQPFFVAEVFTGSPGKYVGLAETIIGFTLILSGELDSLPEQAFYLVGNINEATEKAMNLKT.

170-177 serves as a coordination point for ATP; the sequence is GGAGVGKT.

It belongs to the ATPase alpha/beta chains family. F-type ATPases have 2 components, CF(1) - the catalytic core - and CF(0) - the membrane proton channel. CF(1) has five subunits: alpha(3), beta(3), gamma(1), delta(1), epsilon(1). CF(0) has four main subunits: a(1), b(1), b'(1) and c(9-12).

The protein localises to the plastid thylakoid membrane. The enzyme catalyses ATP + H2O + 4 H(+)(in) = ADP + phosphate + 5 H(+)(out). Produces ATP from ADP in the presence of a proton gradient across the membrane. The catalytic sites are hosted primarily by the beta subunits. The polypeptide is ATP synthase subunit beta, plastid (Cuscuta reflexa (Southern Asian dodder)).